We begin with the raw amino-acid sequence, 332 residues long: 2,3-diketo-L-gulonate reductase (332 aa).

His44 (proton donor) is an active-site residue. Residues 168 to 174 (ITMVDMS), 224 to 225 (WK), and 304 to 306 (GHE) contribute to the NAD(+) site.

The protein belongs to the LDH2/MDH2 oxidoreductase family. DlgD subfamily. In terms of assembly, homodimer.

It is found in the cytoplasm. The catalysed reaction is 3-dehydro-L-gulonate + NAD(+) = 2,3-dioxo-L-gulonate + NADH + H(+). The enzyme catalyses 3-dehydro-L-gulonate + NADP(+) = 2,3-dioxo-L-gulonate + NADPH + H(+). Its function is as follows. Catalyzes the reduction of 2,3-diketo-L-gulonate in the presence of NADH, to form 3-keto-L-gulonate. The polypeptide is 2,3-diketo-L-gulonate reductase (Escherichia coli O8 (strain IAI1)).